Reading from the N-terminus, the 601-residue chain is Serine/threonine-protein phosphatase 2A 65 kDa regulatory subunit A beta isoform (601 aa).

Ala2 bears the N-acetylalanine mark. HEAT repeat units lie at residues 20–58 (DSLY…GVER), 59–96 (TRSE…GGPD), 97–135 (FAHC…TPVA), 136–173 (LEAY…ASNA), 174–212 (VKAE…ELDS), 213–251 (VKSE…SQDD), 252–290 (LETL…GPKI), 291–333 (TLND…RETI), 334–372 (IMNQ…GKEN), 373–411 (TIEH…GIRQ), 412–450 (LSQS…GVEF), 451–489 (FDEK…GTEW), 490–528 (AQNT…GQEI), 529–567 (TTKQ…DTNA), and 568–601 (LQGE…LALA).

It belongs to the phosphatase 2A regulatory subunit A family. PP2A consists of a common heterodimeric core enzyme, composed of a 36 kDa catalytic subunit (subunit C) and a 65 kDa constant regulatory subunit (PR65 or subunit A), that associates with a variety of regulatory subunits. Proteins that associate with the core dimer include three families of regulatory subunits B (the R2/B/PR55/B55, R3/B''/PR72/PR130/PR59 and R5/B'/B56 families), the 48 kDa variable regulatory subunit, viral proteins, and cell signaling molecules. Interacts with IPO9. Interacts with SGO1. Interacts with RAF1.

The PR65 subunit of protein phosphatase 2A serves as a scaffolding molecule to coordinate the assembly of the catalytic subunit and a variable regulatory B subunit. The protein is Serine/threonine-protein phosphatase 2A 65 kDa regulatory subunit A beta isoform (PPP2R1B) of Homo sapiens (Human).